The following is a 396-amino-acid chain: MSKLNAYFGEYGGQFVPQILVPALDQLEHEFIKAQADESFKQEFKELLQEYAGRPTALTKTRNIVKNTKTKLYLKREDLLHGGAHKTNQVLGQALLAKRMGKKEIIAETGAGQHGVATALACALLDLKCRVYMGAKDVERQSPNVFRMKLMGAEVIPVHSGSATLKDACNEALRDWSANYNKAHYLLGTAAGPHPFPTIVREFQRMIGEETKQQILAKEGKLPDAVIACVGGGSNAIGMFADFIDETSVQLIGVEPAGKGIETGEHGAPLKHGKTGIFFGMKAPLMQNSDGQIEESYSISAGLDFPSVGPQHAHLLAIGRAEYASATDNEALDAFKLLCKKEGIIPALESSHALAYALKLAYENPDKEQLLVVNLSGRGDKDIFTVHDILKEKGEM.

Lys86 is subject to N6-(pyridoxal phosphate)lysine.

This sequence belongs to the TrpB family. Tetramer of two alpha and two beta chains. The cofactor is pyridoxal 5'-phosphate.

The enzyme catalyses (1S,2R)-1-C-(indol-3-yl)glycerol 3-phosphate + L-serine = D-glyceraldehyde 3-phosphate + L-tryptophan + H2O. Its pathway is amino-acid biosynthesis; L-tryptophan biosynthesis; L-tryptophan from chorismate: step 5/5. Its function is as follows. The beta subunit is responsible for the synthesis of L-tryptophan from indole and L-serine. The protein is Tryptophan synthase beta chain of Francisella philomiragia subsp. philomiragia (strain ATCC 25017 / CCUG 19701 / FSC 153 / O#319-036).